Here is a 107-residue protein sequence, read N- to C-terminus: Phosphoribosyl-ATP pyrophosphatase (107 aa).

This sequence belongs to the PRA-PH family.

The protein localises to the cytoplasm. The enzyme catalyses 1-(5-phospho-beta-D-ribosyl)-ATP + H2O = 1-(5-phospho-beta-D-ribosyl)-5'-AMP + diphosphate + H(+). It functions in the pathway amino-acid biosynthesis; L-histidine biosynthesis; L-histidine from 5-phospho-alpha-D-ribose 1-diphosphate: step 2/9. The polypeptide is Phosphoribosyl-ATP pyrophosphatase (hisE) (Mesorhizobium japonicum (strain LMG 29417 / CECT 9101 / MAFF 303099) (Mesorhizobium loti (strain MAFF 303099))).